Here is a 151-residue protein sequence, read N- to C-terminus: Pyruvoyl-dependent arginine decarboxylase (151 aa).

The residue at position 42 (Ser-42) is a Pyruvic acid (Ser).

It belongs to the PdaD family. Pyruvate serves as cofactor.

The enzyme catalyses L-arginine + H(+) = agmatine + CO2. This is Pyruvoyl-dependent arginine decarboxylase from Methanothermobacter thermautotrophicus (strain ATCC 29096 / DSM 1053 / JCM 10044 / NBRC 100330 / Delta H) (Methanobacterium thermoautotrophicum).